A 181-amino-acid polypeptide reads, in one-letter code: MGYPGKNTKGYEAPKRPFEKQRIEDETRIVIEYGLRNKREVWRAQSVLRRYRKAARELLAFMSQSSDEQQIATKKEHLLGHLNRIGLLGPDADIGDVLSLKIQQPLERRLQTMVYRQGLARSPKQARQMVTHGHIAIAGRRVDIPSYRVPRDQETLISYYGTSPLTSEGHPEIERINKKRR.

An S4 RNA-binding domain is found at 108–177 (RRLQTMVYRQ…EGHPEIERIN (70 aa)). The segment at 161–181 (GTSPLTSEGHPEIERINKKRR) is disordered. Residues 169 to 181 (GHPEIERINKKRR) show a composition bias toward basic and acidic residues.

Belongs to the universal ribosomal protein uS4 family. Part of the 30S ribosomal subunit. Contacts protein S5. The interaction surface between S4 and S5 is involved in control of translational fidelity.

Functionally, one of the primary rRNA binding proteins, it binds directly to 16S rRNA where it nucleates assembly of the body of the 30S subunit. In terms of biological role, with S5 and S12 plays an important role in translational accuracy. In Methanosphaerula palustris (strain ATCC BAA-1556 / DSM 19958 / E1-9c), this protein is Small ribosomal subunit protein uS4.